The chain runs to 886 residues: DNA repair and recombination protein RAD54B (886 aa).

Over residues 1–12 (MRRSAAPSQVQG) the composition is skewed to polar residues. Residues 1–95 (MRRSAAPSQV…ASKEITESKA (95 aa)) form a disordered region. Phosphoserine is present on Ser14. Residues 47 to 62 (AEQSQNDPGVCSSNPC) are compositionally biased toward polar residues. Basic and acidic residues-rich tracts occupy residues 67–76 (IPREVGDGTR) and 86–95 (ASKEITESKA). The region spanning 291–458 (GMRAVGKCGA…FALVDFVNPG (168 aa)) is the Helicase ATP-binding domain. 304 to 311 (DEMGLGKT) is a binding site for ATP. A DEGH box motif is present at residues 409-412 (DEGH). The Helicase C-terminal domain maps to 627-788 (KLLAVIHELR…HIQFSVEELK (162 aa)).

The protein belongs to the SNF2/RAD54 helicase family. Interacts with RAD51 through the NH2-terminal domain.

Its subcellular location is the nucleus. Involved in DNA repair and mitotic recombination. May play an active role in recombination processes in concert with other members of the RAD52 epistasis group. This Mus musculus (Mouse) protein is DNA repair and recombination protein RAD54B (Rad54b).